The chain runs to 374 residues: Homoserine O-succinyltransferase (374 aa).

An AB hydrolase-1 domain is found at 47–357 (NAILVCHALS…NFGHDSFLME (311 aa)). The active-site Nucleophile is the S153. Substrate is bound at residue R223. Residues D318 and H351 contribute to the active site. A substrate-binding site is contributed by D352.

It belongs to the AB hydrolase superfamily. MetX family. In terms of assembly, homodimer.

The protein localises to the cytoplasm. The enzyme catalyses L-homoserine + succinyl-CoA = O-succinyl-L-homoserine + CoA. Its pathway is amino-acid biosynthesis; L-methionine biosynthesis via de novo pathway; O-succinyl-L-homoserine from L-homoserine: step 1/1. In terms of biological role, transfers a succinyl group from succinyl-CoA to L-homoserine, forming succinyl-L-homoserine. The chain is Homoserine O-succinyltransferase from Dechloromonas aromatica (strain RCB).